Here is a 258-residue protein sequence, read N- to C-terminus: 4-hydroxy-tetrahydrodipicolinate reductase (258 aa).

NAD(+) contacts are provided by residues 8 to 13 (GGSGKM), 86 to 88 (GTT), and 110 to 113 (ATNM). His-142 (proton donor/acceptor) is an active-site residue. Residue His-143 coordinates (S)-2,3,4,5-tetrahydrodipicolinate. The Proton donor role is filled by Lys-146. 152–153 (GT) lines the (S)-2,3,4,5-tetrahydrodipicolinate pocket.

Belongs to the DapB family.

The protein resides in the cytoplasm. The catalysed reaction is (S)-2,3,4,5-tetrahydrodipicolinate + NAD(+) + H2O = (2S,4S)-4-hydroxy-2,3,4,5-tetrahydrodipicolinate + NADH + H(+). The enzyme catalyses (S)-2,3,4,5-tetrahydrodipicolinate + NADP(+) + H2O = (2S,4S)-4-hydroxy-2,3,4,5-tetrahydrodipicolinate + NADPH + H(+). The protein operates within amino-acid biosynthesis; L-lysine biosynthesis via DAP pathway; (S)-tetrahydrodipicolinate from L-aspartate: step 4/4. In terms of biological role, catalyzes the conversion of 4-hydroxy-tetrahydrodipicolinate (HTPA) to tetrahydrodipicolinate. This chain is 4-hydroxy-tetrahydrodipicolinate reductase, found in Campylobacter hominis (strain ATCC BAA-381 / DSM 21671 / CCUG 45161 / LMG 19568 / NCTC 13146 / CH001A).